We begin with the raw amino-acid sequence, 245 residues long: MKIIFNADDFGISPGAVYGILESYKRGVVKSTTLLANSPAFDLAVEVAKENPGLDIGAHLTLTFGSPVLQGLETLTDDDGRFRRNYTSLENGLADVDMNEVERELTAQIEKILDAGITISHFDTHHSIEPLIYPVQHKLAEKYGVSIRRHSDVSDFGAIKTPDLFATEFYADGVSFETIKKLVQKHIGTNDVVEVMTHPAFIDETLREISSYVEPRIKEVSILTSRELQAYLGQQEVEIISFRDL.

Mg(2+) is bound by residues H59 and H125.

Belongs to the YdjC deacetylase family. Homodimer. Requires Mg(2+) as cofactor.

Probably catalyzes the deacetylation of acetylated carbohydrates an important step in the degradation of oligosaccharides. The protein is Carbohydrate deacetylase of Listeria monocytogenes serotype 4b (strain CLIP80459).